Reading from the N-terminus, the 432-residue chain is MWRGVGMVVQQFINRIRNCPLARDIIKKFFIPVIKERKNIEKEVEDILKVLRKNYCSGEYANKDCICAWFKFFEDVGRLHEALELKAFWEIIFPNHLNDLSESLQLFISNYAYMRPFGSSYSSIRVRIHGFIGAVCIDRNFNLHNNTWISNICNCYENNLRMLGLGFYTSDTLDPRYNINPSCNINSTTTNKCGLLYIISNTQITASLVSYLLNLLRNGNIYDAYNFLIRIRGVGDKIACLFLRDISIIHNLMLYGDCRDLLYKPIDRVVKKVIEELVKCKCKLNYNFDINEVLEKFDYTECRCIQKLRKNAKIDSNDFKTLYPYKIFLYEYSKKCKLDQRYVEMGMWFFNSKVAKYYNRRLCKYTIQEACKDLIKRLRKAINNTNIRYIGNNQFEININGKIIIVSEDELIDLILKGEIEIYDELLDIIFF.

This is an uncharacterized protein from Methanocaldococcus jannaschii (strain ATCC 43067 / DSM 2661 / JAL-1 / JCM 10045 / NBRC 100440) (Methanococcus jannaschii).